We begin with the raw amino-acid sequence, 117 residues long: uncharacterized protein (117 aa).

Transmembrane regions (helical) follow at residues Ile-9 to Phe-29 and Val-56 to Pro-76.

It is found in the membrane. This is an uncharacterized protein from Saccharomyces cerevisiae (strain ATCC 204508 / S288c) (Baker's yeast).